Here is a 385-residue protein sequence, read N- to C-terminus: Glucans biosynthesis protein C (385 aa).

Helical transmembrane passes span 17–37 (AWLMLLGIPFHISLIYSSHTW), 60–80 (MLVFFVISGYFSYMLFLRYPL), 91–111 (VGIPMLTAIPLLTLPQFIMLQ), 137–157 (ISHLWFLLVLVVMTTLCVWIF), 173–193 (KFSMVKLSVIFLCLGIGYAVI), 212–232 (FIVMQTLFYLPFFILGALAFI), 239–259 (LFTTPSRGCTLAAALAFVAYL), 274–294 (TESVITMVLGLWMVNVVFSFG), 311–331 (ASLFIYLVHHPLTLFFGAYIT), and 338–358 (WLGFLCGLIFVVGIAIILYEI).

Belongs to the acyltransferase 3 family. OpgC subfamily.

Its subcellular location is the cell membrane. Its pathway is glycan metabolism; osmoregulated periplasmic glucan (OPG) biosynthesis. Necessary for the succinyl substitution of periplasmic glucans. Could catalyze the transfer of succinyl residues from the cytoplasmic side of the membrane to the nascent glucan backbones on the periplasmic side of the membrane. The sequence is that of Glucans biosynthesis protein C from Shigella boydii serotype 4 (strain Sb227).